A 369-amino-acid chain; its full sequence is Putative FAD-dependent oxidoreductase LodB (369 aa).

FAD contacts are provided by residues 10–14 (GGGPA) and Arg103.

FAD is required as a cofactor.

The protein resides in the cytoplasm. In terms of biological role, is required for lysine-epsilon oxidase (LOD) activity in M.mediterranea. May be involved in the generation of the quinonic cofactor of LodA, leading to the active form of LodA containing a tyrosine-derived quinone cofactor. This is Putative FAD-dependent oxidoreductase LodB (lodB) from Marinomonas mediterranea (strain ATCC 700492 / JCM 21426 / NBRC 103028 / MMB-1).